Here is a 157-residue protein sequence, read N- to C-terminus: Mitochondrial inner membrane protease subunit 1 (157 aa).

Residues Ser-35 and Lys-80 contribute to the active site.

The protein belongs to the peptidase S26 family. IMP1 subfamily. As to quaternary structure, heterodimer of 2 subunits, imp1 and imp2.

It is found in the mitochondrion inner membrane. Catalyzes the removal of transit peptides required for the targeting of proteins from the mitochondrial matrix, across the inner membrane, into the inter-membrane space. This Schizosaccharomyces pombe (strain 972 / ATCC 24843) (Fission yeast) protein is Mitochondrial inner membrane protease subunit 1 (imp1).